The chain runs to 134 residues: Profilin-4 (134 aa).

Belongs to the profilin family. Occurs in many kinds of cells as a complex with monomeric actin in a 1:1 ratio. In terms of tissue distribution, specifically expressed in mature and germinating pollen grains, and growing pollen tubes (at protein level).

Its subcellular location is the cytoplasm. The protein localises to the cytoskeleton. Its function is as follows. Binds to actin monomers and regulates the organization of the actin cytoskeleton. At high concentrations, profilin prevents the polymerization of actin, whereas it enhances it at low concentrations. At low concentrations, associates with the poly-proline motif of formins to enhance actin filament elongation rate. Acts redundantly with PRF5 to regulate apical actin polymerization at the tip of pollen tube and control polarized pollen tube growth. Functions probably by favoring formin-mediated actin polymerization at pollen tube tips. The protein is Profilin-4 of Arabidopsis thaliana (Mouse-ear cress).